Consider the following 89-residue polypeptide: Small ribosomal subunit protein uS15 (89 aa).

The protein belongs to the universal ribosomal protein uS15 family. As to quaternary structure, part of the 30S ribosomal subunit. Forms a bridge to the 50S subunit in the 70S ribosome, contacting the 23S rRNA.

Functionally, one of the primary rRNA binding proteins, it binds directly to 16S rRNA where it helps nucleate assembly of the platform of the 30S subunit by binding and bridging several RNA helices of the 16S rRNA. In terms of biological role, forms an intersubunit bridge (bridge B4) with the 23S rRNA of the 50S subunit in the ribosome. The sequence is that of Small ribosomal subunit protein uS15 from Oceanobacillus iheyensis (strain DSM 14371 / CIP 107618 / JCM 11309 / KCTC 3954 / HTE831).